Reading from the N-terminus, the 183-residue chain is MAASVAWGGVNAGFLLRAARGAWWSRPGGFWGSGEAAAPAIARKFRATGSRPAGEEEAGGPERPGDVVNVVFVDRSGQRIPVSGRVGDNVLHLAQRHGLDLEGACEASLACSTCHVYVSEDHLDLLPPPDEREDDMLDMAPLLQENSRLGCQIVLTPELEGAEFTLPKITRNFYVDGHVPKPH.

The transit peptide at 1 to 52 directs the protein to the mitochondrion; it reads MAASVAWGGVNAGFLLRAARGAWWSRPGGFWGSGEAAAPAIARKFRATGSRP. Positions 68–170 constitute a 2Fe-2S ferredoxin-type domain; the sequence is VNVVFVDRSG…GAEFTLPKIT (103 aa). Residues cysteine 105, cysteine 111, cysteine 114, and cysteine 151 each coordinate [2Fe-2S] cluster.

The protein belongs to the adrenodoxin/putidaredoxin family. In terms of assembly, component of the mitochondrial core iron-sulfur cluster (ISC) complex composed of NFS1, LYRM4, NDUFAB1, ISCU, FXN, and FDX2; this complex is a heterohexamer containing two copies of each monomer. Form a heterodimer complex with NFS1. Interacts (in both their reduced and oxidized states) with the cysteine desulfurase (NFS1:LYRM4) complex; this interaction stimulates cysteine desulfurase activity, and serves as a reductant for Fe-S cluster assembly. It depends on [2Fe-2S] cluster as a cofactor.

The protein resides in the mitochondrion. The protein localises to the mitochondrion matrix. Its function is as follows. Electron donor, of the core iron-sulfur cluster (ISC) assembly complex, that acts to reduce the persulfide into sulfide during [2Fe-2S] clusters assembly on the scaffolding protein ISCU. The core iron-sulfur cluster (ISC) assembly complex is involved in the de novo synthesis of a [2Fe-2S] cluster, the first step of the mitochondrial iron-sulfur protein biogenesis. This process is initiated by the cysteine desulfurase complex (NFS1:LYRM4:NDUFAB1) that produces persulfide which is delivered on the scaffold protein ISCU in a FXN-dependent manner. Then this complex is stabilized by FDX2 which provides reducing equivalents to accomplish the [2Fe-2S] cluster assembly. Finally, the [2Fe-2S] cluster is transferred from ISCU to chaperone proteins, including HSCB, HSPA9 and GLRX5. Essential for coenzyme Q biosynthesis: together with FDXR, transfers the electrons required for the hydroxylation reaction performed by COQ6. This Bos taurus (Bovine) protein is Ferredoxin-2, mitochondrial.